Here is a 109-residue protein sequence, read N- to C-terminus: MSASELATSYSALILADEGIEITSDKLLSLTKAANVDVEPIWATIFAKALEGKDLKELLLNIGSGAGAAPVAGGAAAPAAADGEAPAEEKEEAKEEEESDEDMGFGLFD.

Residues 69 to 84 (APVAGGAAAPAAADGE) are compositionally biased toward low complexity. A disordered region spans residues 69–109 (APVAGGAAAPAAADGEAPAEEKEEAKEEEESDEDMGFGLFD). A compositionally biased stretch (acidic residues) spans 94 to 103 (KEEEESDEDM).

Belongs to the eukaryotic ribosomal protein P1/P2 family. Component of the large ribosomal subunit (LSU). Mature yeast ribosomes consist of a small (40S) and a large (60S) subunit. The 40S small subunit contains 1 molecule of ribosomal RNA (18S rRNA) and at least 33 different proteins. The large 60S subunit contains 3 rRNA molecules (25S, 5.8S and 5S rRNA) and at least 46 different proteins. The acidic ribosomal P-proteins form the stalk structure of the 60S subunit. They are organized as a pentameric complex in which uL10/P0 interacts with 2 heterodimers of P1 and P2 proteins.

Its subcellular location is the cytoplasm. In terms of biological role, component of the ribosome, a large ribonucleoprotein complex responsible for the synthesis of proteins in the cell. The small ribosomal subunit (SSU) binds messenger RNAs (mRNAs) and translates the encoded message by selecting cognate aminoacyl-transfer RNA (tRNA) molecules. The large subunit (LSU) contains the ribosomal catalytic site termed the peptidyl transferase center (PTC), which catalyzes the formation of peptide bonds, thereby polymerizing the amino acids delivered by tRNAs into a polypeptide chain. The nascent polypeptides leave the ribosome through a tunnel in the LSU and interact with protein factors that function in enzymatic processing, targeting, and the membrane insertion of nascent chains at the exit of the ribosomal tunnel. The chain is Large ribosomal subunit protein P1A (rpp101) from Schizosaccharomyces pombe (strain 972 / ATCC 24843) (Fission yeast).